The chain runs to 143 residues: Large ribosomal subunit protein uL11 (143 aa).

The protein belongs to the universal ribosomal protein uL11 family. In terms of assembly, part of the ribosomal stalk of the 50S ribosomal subunit. Interacts with L10 and the large rRNA to form the base of the stalk. L10 forms an elongated spine to which L12 dimers bind in a sequential fashion forming a multimeric L10(L12)X complex. Post-translationally, one or more lysine residues are methylated.

In terms of biological role, forms part of the ribosomal stalk which helps the ribosome interact with GTP-bound translation factors. The chain is Large ribosomal subunit protein uL11 from Paracidovorax citrulli (strain AAC00-1) (Acidovorax citrulli).